The chain runs to 525 residues: GMP synthase [glutamine-hydrolyzing] (525 aa).

The Glutamine amidotransferase type-1 domain maps to 16–205; that stretch reads PVLVVDFGAQ…LHDFAGLGAD (190 aa). Cys-93 (nucleophile) is an active-site residue. Catalysis depends on residues His-179 and Glu-181. One can recognise a GMPS ATP-PPase domain in the interval 206–399; sequence WTAANIAGVL…LGLPEEIVAR (194 aa). 233–239 provides a ligand contact to ATP; it reads SGGVDSA.

Homodimer.

It carries out the reaction XMP + L-glutamine + ATP + H2O = GMP + L-glutamate + AMP + diphosphate + 2 H(+). It functions in the pathway purine metabolism; GMP biosynthesis; GMP from XMP (L-Gln route): step 1/1. Functionally, catalyzes the synthesis of GMP from XMP. This is GMP synthase [glutamine-hydrolyzing] from Mycolicibacterium paratuberculosis (strain ATCC BAA-968 / K-10) (Mycobacterium paratuberculosis).